Consider the following 246-residue polypeptide: RNA polymerase sigma-B factor (246 aa).

Residues 25-38 carry the Polymerase core binding motif; it reads DLIQEGNIGLMKAV. Residues 201 to 220 constitute a DNA-binding region (H-T-H motif); sequence LKELGEHFGFSRERARQLEI.

Belongs to the sigma-70 factor family.

Sigma factors are initiation factors that promote the attachment of RNA polymerase to specific initiation sites and are then released. This sigma factor is essential for late-stage differentiation of M.xanthus. The protein is RNA polymerase sigma-B factor (sigB) of Myxococcus xanthus.